The sequence spans 406 residues: Succinylornithine transaminase (406 aa).

At Lys-252 the chain carries N6-(pyridoxal phosphate)lysine.

Belongs to the class-III pyridoxal-phosphate-dependent aminotransferase family. AstC subfamily. It depends on pyridoxal 5'-phosphate as a cofactor.

It catalyses the reaction N(2)-succinyl-L-ornithine + 2-oxoglutarate = N-succinyl-L-glutamate 5-semialdehyde + L-glutamate. The protein operates within amino-acid degradation; L-arginine degradation via AST pathway; L-glutamate and succinate from L-arginine: step 3/5. In terms of biological role, catalyzes the transamination of N(2)-succinylornithine and alpha-ketoglutarate into N(2)-succinylglutamate semialdehyde and glutamate. Can also act as an acetylornithine aminotransferase. The polypeptide is Succinylornithine transaminase (Escherichia coli O17:K52:H18 (strain UMN026 / ExPEC)).